The primary structure comprises 314 residues: Small ribosomal subunit protein uS11m (314 aa).

Residues 1–37 constitute a mitochondrion transit peptide; sequence MNGVSRHLRASSLLSLIRSYGGINSVCRFSSQSDGFS. The segment at 34 to 138 is disordered; sequence DGFSGGRFRE…GSGFSAPSLS (105 aa). Polar residues predominate over residues 50-63; that stretch reads ESANNSGLSNTGRI. Positions 103–114 are enriched in low complexity; the sequence is SSLRSRLPNSLP.

The protein belongs to the universal ribosomal protein uS11 family. As to quaternary structure, component of the mitochondrial ribosome small subunit (28S) which comprises a 12S rRNA and about 30 distinct proteins.

It is found in the mitochondrion. In terms of biological role, required for karyogamy during female gametophyte development, when the two polar nuclei fuse to form the diploid central cell nucleus. The chain is Small ribosomal subunit protein uS11m from Arabidopsis thaliana (Mouse-ear cress).